Here is a 236-residue protein sequence, read N- to C-terminus: Potassium/proton antiporter CemA (236 aa).

Transmembrane regions (helical) follow at residues 12–32 (TVTS…TNHV), 114–134 (IANV…LLLG), 161–181 (IILF…EILI), and 196–216 (FIFL…KYWI).

It belongs to the CemA family.

The protein localises to the plastid. It localises to the chloroplast inner membrane. It catalyses the reaction K(+)(in) + H(+)(out) = K(+)(out) + H(+)(in). In terms of biological role, contributes to K(+)/H(+) antiport activity by supporting proton efflux to control proton extrusion and homeostasis in chloroplasts in a light-dependent manner to modulate photosynthesis. Prevents excessive induction of non-photochemical quenching (NPQ) under continuous-light conditions. Indirectly promotes efficient inorganic carbon uptake into chloroplasts. The chain is Potassium/proton antiporter CemA from Chlorokybus atmophyticus (Soil alga).